The primary structure comprises 100 residues: Small ribosomal subunit protein uS14c (100 aa).

It belongs to the universal ribosomal protein uS14 family. As to quaternary structure, part of the 30S ribosomal subunit.

Its subcellular location is the plastid. It localises to the chloroplast. Functionally, binds 16S rRNA, required for the assembly of 30S particles. The chain is Small ribosomal subunit protein uS14c from Citrus sinensis (Sweet orange).